Consider the following 445-residue polypeptide: Phosphoglucosamine mutase (445 aa).

Ser-99 serves as the catalytic Phosphoserine intermediate. Mg(2+) contacts are provided by Ser-99, Asp-242, Asp-244, and Asp-246. A Phosphoserine modification is found at Ser-99.

It belongs to the phosphohexose mutase family. Requires Mg(2+) as cofactor. Activated by phosphorylation.

The catalysed reaction is alpha-D-glucosamine 1-phosphate = D-glucosamine 6-phosphate. Functionally, catalyzes the conversion of glucosamine-6-phosphate to glucosamine-1-phosphate. This chain is Phosphoglucosamine mutase, found in Campylobacter jejuni subsp. jejuni serotype O:2 (strain ATCC 700819 / NCTC 11168).